A 92-amino-acid polypeptide reads, in one-letter code: Large ribosomal subunit protein uL24c (92 aa).

Belongs to the universal ribosomal protein uL24 family. Part of the 50S ribosomal subunit.

Its subcellular location is the plastid. The protein resides in the chloroplast. Its function is as follows. One of two assembly initiator proteins, it binds directly to the 5'-end of the 23S rRNA, where it nucleates assembly of the 50S subunit. This chain is Large ribosomal subunit protein uL24c (rpl24), found in Gracilaria tenuistipitata var. liui (Red alga).